The chain runs to 210 residues: Large ribosomal subunit protein bL25 (210 aa).

A disordered region spans residues 191–210 (KPAPKAAETDEDGEEAASEE). Over residues 199–210 (TDEDGEEAASEE) the composition is skewed to acidic residues.

It belongs to the bacterial ribosomal protein bL25 family. CTC subfamily. Part of the 50S ribosomal subunit; part of the 5S rRNA/L5/L18/L25 subcomplex. Contacts the 5S rRNA. Binds to the 5S rRNA independently of L5 and L18.

Functionally, this is one of the proteins that binds to the 5S RNA in the ribosome where it forms part of the central protuberance. This is Large ribosomal subunit protein bL25 from Alteromonas mediterranea (strain DSM 17117 / CIP 110805 / LMG 28347 / Deep ecotype).